Here is a 244-residue protein sequence, read N- to C-terminus: UPF0280 protein Mhun_0136 (244 aa).

The protein belongs to the UPF0280 family.

The chain is UPF0280 protein Mhun_0136 from Methanospirillum hungatei JF-1 (strain ATCC 27890 / DSM 864 / NBRC 100397 / JF-1).